We begin with the raw amino-acid sequence, 418 residues long: Glutamyl-tRNA reductase (418 aa).

Substrate contacts are provided by residues 49–52 (TCNR), S109, 114–116 (EPQ), and Q120. C50 serves as the catalytic Nucleophile. Residue 189–194 (GAGETI) participates in NADP(+) binding.

The protein belongs to the glutamyl-tRNA reductase family. As to quaternary structure, homodimer.

It catalyses the reaction (S)-4-amino-5-oxopentanoate + tRNA(Glu) + NADP(+) = L-glutamyl-tRNA(Glu) + NADPH + H(+). It functions in the pathway porphyrin-containing compound metabolism; protoporphyrin-IX biosynthesis; 5-aminolevulinate from L-glutamyl-tRNA(Glu): step 1/2. Its function is as follows. Catalyzes the NADPH-dependent reduction of glutamyl-tRNA(Glu) to glutamate 1-semialdehyde (GSA). In Klebsiella pneumoniae subsp. pneumoniae (strain ATCC 700721 / MGH 78578), this protein is Glutamyl-tRNA reductase.